A 357-amino-acid polypeptide reads, in one-letter code: DNA integrity scanning protein DisA (357 aa).

Residues 8–146 (VKSIINILQL…GNLRYTLKDI (139 aa)) form the DAC domain. ATP is bound by residues Gly-75, Leu-93, and 106 to 110 (MRHRT).

It belongs to the DisA family. Homooctamer. It depends on Mg(2+) as a cofactor.

The enzyme catalyses 2 ATP = 3',3'-c-di-AMP + 2 diphosphate. In terms of biological role, participates in a DNA-damage check-point that is active prior to asymmetric division when DNA is damaged. DisA forms globular foci that rapidly scan along the chromosomes during sporulation, searching for lesions. When a lesion is present, DisA pauses at the lesion site. This triggers a cellular response that culminates in a temporary block in sporulation initiation. Also has diadenylate cyclase activity, catalyzing the condensation of 2 ATP molecules into cyclic di-AMP (c-di-AMP). c-di-AMP acts as a signaling molecule that couples DNA integrity with progression of sporulation. The rise in c-di-AMP level generated by DisA while scanning the chromosome, operates as a positive signal that advances sporulation; upon encountering a lesion, the DisA focus arrests at the damaged site and halts c-di-AMP synthesis. The chain is DNA integrity scanning protein DisA from Bacillus cereus (strain B4264).